Reading from the N-terminus, the 420-residue chain is Serine hydroxymethyltransferase (420 aa).

(6S)-5,6,7,8-tetrahydrofolate is bound by residues Leu123 and Gly127–Leu129. Lys232 carries the N6-(pyridoxal phosphate)lysine modification.

It belongs to the SHMT family. Homodimer. Pyridoxal 5'-phosphate serves as cofactor.

The protein localises to the cytoplasm. The catalysed reaction is (6R)-5,10-methylene-5,6,7,8-tetrahydrofolate + glycine + H2O = (6S)-5,6,7,8-tetrahydrofolate + L-serine. Its pathway is one-carbon metabolism; tetrahydrofolate interconversion. It functions in the pathway amino-acid biosynthesis; glycine biosynthesis; glycine from L-serine: step 1/1. Its function is as follows. Catalyzes the reversible interconversion of serine and glycine with tetrahydrofolate (THF) serving as the one-carbon carrier. This reaction serves as the major source of one-carbon groups required for the biosynthesis of purines, thymidylate, methionine, and other important biomolecules. Also exhibits THF-independent aldolase activity toward beta-hydroxyamino acids, producing glycine and aldehydes, via a retro-aldol mechanism. The protein is Serine hydroxymethyltransferase of Ehrlichia chaffeensis (strain ATCC CRL-10679 / Arkansas).